Reading from the N-terminus, the 1091-residue chain is MKLLYTDIRTSLTEILTREAEELVAAGKRVFYIAPNSLSFEKERAVLEYLSQQASFSITVTRFAQMARYLVLNDLPAKTTLDDIGLGLAFYKCLAELDPKDLRVYGAIKQDPQLIQQLIELYHEMTKSQMSFLDLENLTDEDKRADLLLIFEKVTAYLNQGQLAQGSQLSHLIEAIENDKVSSDFNQIALVIDGFTRFSAEEERVVDLLHGKGVEIVIGAYASKKAYTSPFSEGNLYQASVKFLHHLASKYQTPAQDCSQTHEKMDSFDKASRLLESSYDFSELALDVDEKDRENLQIWSCLTQKEELELVARSIRQKLHENSDLSYKHFRILLGDVASYQLSLKTIFDQYQIPFYLGRSEAMAHHPLTQFVESILALKRYRFRQEDLINLLRTDLYTDLSQSDIDAFEQYIRYLGINGLPAFQQTFTKSHHGKFNLERLNVLRLRILAPLETLFASRKQKAENLLQKWSVFLKEGAVTKQLQDLTTTLEAVEQERQTEVWKAFCHVLEQFATVFAGSQVSLEDFLALLHSGMSLSQYRTIPATVDTVLVQSYDLIAPLTADFVYAIGLTQDNLPKISQNTSLLTDEERQNLNQTTEEGVQLLIASSENLKKNRYTMLSLVNSARKQLFLSAPSLFNESESKESAYLQELIHFGFRRREKRMNHKGLSKEDMGSYHSLLSSLVAYHQQGEMSDTEQDLTFVKVLSRVIGKKLDLQGLENPAIPTSPSSKTLTKDTLQALYPAKQEFYLSTSGLTEFYLNEYSYFLRYVLGLQEELRLRPDARSHGNFLHRIFERALQLPNEDSFDQRLEQAIQETSQEREFEAIYQESLEAQFTKEVLLDVARTTGHILRHNPAIETIKEEANFGGKDQAFIQLDNGRSVFVRGKVDRIDRLKANGAIGVVDYKSSLTQFQFPHFFNGLNSQLPTYLAALKREGEQNFFGAMYLEMAEPVQSLMAVKSLAGAVVEASKSMKYQGLFLEKESSYLGEFYNKNKANQLTDEEFQLLLDYNAYLYKKAAEKILAGRFAINPYTENGRSIAPYVQQHQAITGFEANYHLGQARFLEKLDLADGKRLVGEKLKQAWLEKIREELNR.

This sequence belongs to the helicase family. AddB/RexB type 2 subfamily. In terms of assembly, heterodimer of AddA and RexB. The cofactor is Mg(2+).

Functionally, the heterodimer acts as both an ATP-dependent DNA helicase and an ATP-dependent, dual-direction single-stranded exonuclease. Recognizes the chi site generating a DNA molecule suitable for the initiation of homologous recombination. This subunit has 5' -&gt; 3' nuclease activity but not helicase activity. The protein is ATP-dependent helicase/deoxyribonuclease subunit B of Streptococcus pneumoniae (strain Hungary19A-6).